The primary structure comprises 428 residues: Histone-lysine N-methyltransferase SMYD3 (428 aa).

N-acetylmethionine is present on M1. The SET domain occupies 4–240 (LKVEKFATAK…VGEELTICYL (237 aa)). S-adenosyl-L-methionine is bound at residue 14 to 16 (RGN). Residue T22 is modified to Phosphothreonine. Zn(2+) contacts are provided by C49, C52, C62, C65, C71, C75, H83, and C87. The MYND-type zinc finger occupies 49-87 (CDRCLLGKEKLMRCSQCRVAKYCSAKCQKKAWPDHKREC). S-adenosyl-L-methionine contacts are provided by residues Y124, N132, N181, 205 to 206 (NH), Y239, and F259. The C-terminal domain; essential for histone methyltransferase activity, nuclear localization and mediates interaction with HSP90AA1 stretch occupies residues 272–428 (DADMLTGDEQ…EECDANIRAS (157 aa)).

This sequence belongs to the class V-like SAM-binding methyltransferase superfamily. Histone-lysine methyltransferase family. Interacts with HSPCA. Interacts with HELZ. Interacts with POLR2A; the interaction may be indirect and may be mediated by HELZ. Interacts with HSP90AA1; this interaction enhances SMYD3 histone-lysine N-methyltransferase. As to expression, expressed in skeletal muscles and testis. Overexpressed in a majority of colorectal and hepatocellular carcinomas.

It is found in the cytoplasm. It localises to the nucleus. The enzyme catalyses L-lysyl(4)-[histone H3] + 3 S-adenosyl-L-methionine = N(6),N(6),N(6)-trimethyl-L-lysyl(4)-[histone H3] + 3 S-adenosyl-L-homocysteine + 3 H(+). With respect to regulation, histone methyltransferase activity strongly stimulated by HSPCA. Its function is as follows. Histone methyltransferase. Specifically methylates 'Lys-4' of histone H3, inducing di- and tri-methylation, but not monomethylation. Also methylates 'Lys-5' of histone H4. Plays an important role in transcriptional activation as a member of an RNA polymerase complex. Binds DNA containing 5'-CCCTCC-3' or 5'-GAGGGG-3' sequences. This chain is Histone-lysine N-methyltransferase SMYD3 (SMYD3), found in Homo sapiens (Human).